Here is a 265-residue protein sequence, read N- to C-terminus: Ribosomal RNA small subunit methyltransferase A (265 aa).

S-adenosyl-L-methionine is bound by residues histidine 13, leucine 15, glycine 40, glutamate 61, aspartate 85, and asparagine 103.

Belongs to the class I-like SAM-binding methyltransferase superfamily. rRNA adenine N(6)-methyltransferase family. RsmA subfamily.

The protein resides in the cytoplasm. The enzyme catalyses adenosine(1518)/adenosine(1519) in 16S rRNA + 4 S-adenosyl-L-methionine = N(6)-dimethyladenosine(1518)/N(6)-dimethyladenosine(1519) in 16S rRNA + 4 S-adenosyl-L-homocysteine + 4 H(+). In terms of biological role, specifically dimethylates two adjacent adenosines (A1518 and A1519) in the loop of a conserved hairpin near the 3'-end of 16S rRNA in the 30S particle. May play a critical role in biogenesis of 30S subunits. This is Ribosomal RNA small subunit methyltransferase A from Bordetella pertussis (strain Tohama I / ATCC BAA-589 / NCTC 13251).